The sequence spans 86 residues: Acyl-CoA-binding protein homolog (86 aa).

The 85-residue stretch at 2 to 86 folds into the ACB domain; it reads VSEQFNAAAE…FVEGLVAKYA (85 aa). Residues Lys-14, 29–33, Lys-51, Lys-55, and Tyr-74 contribute to the an acyl-CoA site; that span reads YALFK.

It belongs to the ACBP family. In terms of tissue distribution, expressed in larval and pupal brains. In adults, expressed in cardia, part of the Malpighian tubules, fat body, and gametes of both sexes.

Functionally, binds medium- and long-chain acyl-CoA esters with very high affinity and may function as an intracellular carrier of acyl-CoA esters. May be involved in energy metabolism in a manner that depends on the substrate used for energy production. Dbi and its metabolites are involved in the regulation of multiple biological processes. The sequence is that of Acyl-CoA-binding protein homolog from Drosophila melanogaster (Fruit fly).